We begin with the raw amino-acid sequence, 357 residues long: Thymidine kinase (357 aa).

17 to 24 contributes to the ATP binding site; that stretch reads GAHGLGKT. E45 acts as the Proton acceptor in catalysis. An ATP-binding site is contributed by R186. R192 is a substrate binding site.

It belongs to the herpesviridae thymidine kinase family. Homodimer.

The enzyme catalyses thymidine + ATP = dTMP + ADP + H(+). In terms of biological role, catalyzes the transfer of the gamma-phospho group of ATP to thymidine to generate dTMP in the salvage pathway of pyrimidine synthesis. The dTMP serves as a substrate for DNA polymerase during viral DNA replication. Allows the virus to be reactivated and to grow in non-proliferative cells lacking a high concentration of phosphorylated nucleic acid precursors. This Bovine herpesvirus 1 (strain 6660) (BoHV-1) protein is Thymidine kinase.